The chain runs to 223 residues: Protein-L-isoaspartate O-methyltransferase (223 aa).

Ser-70 is a catalytic residue.

Belongs to the methyltransferase superfamily. L-isoaspartyl/D-aspartyl protein methyltransferase family.

It is found in the cytoplasm. It catalyses the reaction [protein]-L-isoaspartate + S-adenosyl-L-methionine = [protein]-L-isoaspartate alpha-methyl ester + S-adenosyl-L-homocysteine. Catalyzes the methyl esterification of L-isoaspartyl residues in peptides and proteins that result from spontaneous decomposition of normal L-aspartyl and L-asparaginyl residues. It plays a role in the repair and/or degradation of damaged proteins. This chain is Protein-L-isoaspartate O-methyltransferase, found in Methylobacillus flagellatus (strain ATCC 51484 / DSM 6875 / VKM B-1610 / KT).